The chain runs to 342 residues: tRNA dimethylallyltransferase (342 aa).

Over residues 1 to 13 the composition is skewed to polar residues; that stretch reads MNDTTAKTLNCSP. The interval 1–21 is disordered; that stretch reads MNDTTAKTLNCSPASRDGFPE. 40–47 contacts ATP; sequence GPTGVGKT. 42 to 47 serves as a coordination point for substrate; the sequence is TGVGKT. Interaction with substrate tRNA stretches follow at residues 65–68 and 189–193; these read DSMQ and QRILR.

It belongs to the IPP transferase family. Monomer. Requires Mg(2+) as cofactor.

It carries out the reaction adenosine(37) in tRNA + dimethylallyl diphosphate = N(6)-dimethylallyladenosine(37) in tRNA + diphosphate. Its function is as follows. Catalyzes the transfer of a dimethylallyl group onto the adenine at position 37 in tRNAs that read codons beginning with uridine, leading to the formation of N6-(dimethylallyl)adenosine (i(6)A). The chain is tRNA dimethylallyltransferase from Syntrophobacter fumaroxidans (strain DSM 10017 / MPOB).